We begin with the raw amino-acid sequence, 406 residues long: Ribose-phosphate pyrophosphokinase 3, mitochondrial (406 aa).

Residues 1–32 (MAATPHRHLLQPCKNPAISSSETLKPSSSFSL) are disordered. Residues 1–87 (MAATPHRHLL…RRFQMSSNQE (87 aa)) constitute a mitochondrion transit peptide. The segment covering 18-32 (ISSSETLKPSSSFSL) has biased composition (low complexity). Mg(2+)-binding residues include D226 and H228. The segment at 309 to 324 (GRHVVIVDDLVQSGGT) is binding of phosphoribosylpyrophosphate.

Belongs to the ribose-phosphate pyrophosphokinase family.

The protein localises to the mitochondrion. The catalysed reaction is D-ribose 5-phosphate + ATP = 5-phospho-alpha-D-ribose 1-diphosphate + AMP + H(+). This is Ribose-phosphate pyrophosphokinase 3, mitochondrial (PRS3) from Spinacia oleracea (Spinach).